We begin with the raw amino-acid sequence, 202 residues long: Small ribosomal subunit protein uS4c (202 aa).

The S4 RNA-binding domain maps to 90 to 158 (MRSDNVIFRL…ISKNIELYQK (69 aa)).

The protein belongs to the universal ribosomal protein uS4 family. In terms of assembly, part of the 30S ribosomal subunit. Contacts protein S5. The interaction surface between S4 and S5 is involved in control of translational fidelity.

The protein resides in the plastid. It is found in the chloroplast. Its function is as follows. One of the primary rRNA binding proteins, it binds directly to 16S rRNA where it nucleates assembly of the body of the 30S subunit. In terms of biological role, with S5 and S12 plays an important role in translational accuracy. This chain is Small ribosomal subunit protein uS4c (rps4), found in Exsertotheca crispa (Moss).